The following is a 361-amino-acid chain: Aminomethyltransferase (361 aa).

Belongs to the GcvT family. The glycine cleavage system is composed of four proteins: P, T, L and H.

The catalysed reaction is N(6)-[(R)-S(8)-aminomethyldihydrolipoyl]-L-lysyl-[protein] + (6S)-5,6,7,8-tetrahydrofolate = N(6)-[(R)-dihydrolipoyl]-L-lysyl-[protein] + (6R)-5,10-methylene-5,6,7,8-tetrahydrofolate + NH4(+). In terms of biological role, the glycine cleavage system catalyzes the degradation of glycine. This chain is Aminomethyltransferase, found in Herpetosiphon aurantiacus (strain ATCC 23779 / DSM 785 / 114-95).